Here is a 348-residue protein sequence, read N- to C-terminus: Uroporphyrinogen decarboxylase (348 aa).

Substrate is bound by residues 27-31 (RQAGR), Phe46, Asp76, Tyr152, Ser207, and His320.

It belongs to the uroporphyrinogen decarboxylase family. As to quaternary structure, homodimer.

The protein resides in the cytoplasm. The catalysed reaction is uroporphyrinogen III + 4 H(+) = coproporphyrinogen III + 4 CO2. The protein operates within porphyrin-containing compound metabolism; protoporphyrin-IX biosynthesis; coproporphyrinogen-III from 5-aminolevulinate: step 4/4. Catalyzes the decarboxylation of four acetate groups of uroporphyrinogen-III to yield coproporphyrinogen-III. The protein is Uroporphyrinogen decarboxylase of Bacillus cereus (strain AH820).